Here is a 637-residue protein sequence, read N- to C-terminus: Biosynthetic arginine decarboxylase (637 aa).

Position 101 is an N6-(pyridoxal phosphate)lysine (K101). 286-296 (VDIGGGLGVDY) is a substrate binding site.

The protein belongs to the Orn/Lys/Arg decarboxylase class-II family. SpeA subfamily. The cofactor is Mg(2+). Pyridoxal 5'-phosphate serves as cofactor.

The catalysed reaction is L-arginine + H(+) = agmatine + CO2. It functions in the pathway amine and polyamine biosynthesis; agmatine biosynthesis; agmatine from L-arginine: step 1/1. Functionally, catalyzes the biosynthesis of agmatine from arginine. This chain is Biosynthetic arginine decarboxylase, found in Marinobacter nauticus (strain ATCC 700491 / DSM 11845 / VT8) (Marinobacter aquaeolei).